A 246-amino-acid polypeptide reads, in one-letter code: tRNA (guanine-N(7)-)-methyltransferase (246 aa).

Residues 1–26 form a disordered region; that stretch reads MIENPSPSAANLPEHPSTDASHPRNI. S-adenosyl-L-methionine-binding residues include Glu75, Glu100, Asp127, and Asp150. The active site involves Asp150. Lys154 serves as a coordination point for substrate. The segment at 156–161 is interaction with RNA; the sequence is KHNKRR. Substrate-binding positions include Asp186 and 225 to 228; that span reads TKFE.

Belongs to the class I-like SAM-binding methyltransferase superfamily. TrmB family.

It catalyses the reaction guanosine(46) in tRNA + S-adenosyl-L-methionine = N(7)-methylguanosine(46) in tRNA + S-adenosyl-L-homocysteine. The protein operates within tRNA modification; N(7)-methylguanine-tRNA biosynthesis. Its function is as follows. Catalyzes the formation of N(7)-methylguanine at position 46 (m7G46) in tRNA. The chain is tRNA (guanine-N(7)-)-methyltransferase from Polaromonas sp. (strain JS666 / ATCC BAA-500).